The primary structure comprises 446 residues: Na(+)-translocating NADH-quinone reductase subunit A (446 aa).

This sequence belongs to the NqrA family. In terms of assembly, composed of six subunits; NqrA, NqrB, NqrC, NqrD, NqrE and NqrF.

The catalysed reaction is a ubiquinone + n Na(+)(in) + NADH + H(+) = a ubiquinol + n Na(+)(out) + NAD(+). NQR complex catalyzes the reduction of ubiquinone-1 to ubiquinol by two successive reactions, coupled with the transport of Na(+) ions from the cytoplasm to the periplasm. NqrA to NqrE are probably involved in the second step, the conversion of ubisemiquinone to ubiquinol. The sequence is that of Na(+)-translocating NADH-quinone reductase subunit A from Vibrio anguillarum (Listonella anguillarum).